The following is a 385-amino-acid chain: Aryl-alcohol dehydrogenase [NADP(+)] (385 aa).

Tyr76 acts as the Proton donor in catalysis. Asn238–Asp248 is an NADP(+) binding site.

This sequence belongs to the aldo/keto reductase family. Aldo/keto reductase 2 subfamily. In terms of processing, the N-terminus is blocked.

The catalysed reaction is an aromatic primary alcohol + NADP(+) = an aromatic aldehyde + NADPH + H(+). This Phanerodontia chrysosporium (White-rot fungus) protein is Aryl-alcohol dehydrogenase [NADP(+)].